The following is a 239-amino-acid chain: Protein Thf1 (239 aa).

Residues 183 to 221 (ERVRKDLELYRSSLDRMKQARAVVEEMVKAARRQQERRQ) adopt a coiled-coil conformation. Positions 211-221 (KAARRQQERRQ) are enriched in basic and acidic residues. A disordered region spans residues 211–239 (KAARRQQERRQSAASLPETSLGDPSKPGS).

This sequence belongs to the THF1 family.

Its function is as follows. May be involved in photosynthetic membrane biogenesis. This chain is Protein Thf1, found in Synechococcus sp. (strain JA-2-3B'a(2-13)) (Cyanobacteria bacterium Yellowstone B-Prime).